A 744-amino-acid polypeptide reads, in one-letter code: NAD(P)H-quinone oxidoreductase subunit 5, chloroplastic (744 aa).

Helical transmembrane passes span 9–29 (WIIPFLPLPVPMLIGLGLLLF), 40–60 (WAFQSVLLLSIVMIFSMNLSI), 89–109 (IDPLTSIMSILITTVGIMVLI), 125–145 (FAYMSFFSTSMLGLVTSSNLI), 147–167 (IYIFWELVGICSYLLIGFWFT), 185–205 (GDFGLLLGILGFYWITGSFEF), 219–239 (NEVNLLFVTLCAVLLFAGAIA), 258–278 (TPISALIHAATMVAAGIFLVA), 290–312 (IMNFISLIGIITVFLGATLALAQ), 327–347 (LGYMMLALGMGSYRSALFHLI), 354–374 (ALLFLGSGSVIHSMETLVGYC), 396–416 (TSFLLGTLSLCGIPPLACFWS), 425–445 (WLYSPIFAIIAWSTAGLTAFY), 549–569 (LFPILILVLFTLFVGFLGIPF), 608–628 (VFSVTISSFGIFIAFFLYKPV), and 724–744 (YLFFYFSYVSIFLVIYYFLNF).

It belongs to the complex I subunit 5 family. In terms of assembly, NDH is composed of at least 16 different subunits, 5 of which are encoded in the nucleus.

The protein resides in the plastid. The protein localises to the chloroplast thylakoid membrane. It catalyses the reaction a plastoquinone + NADH + (n+1) H(+)(in) = a plastoquinol + NAD(+) + n H(+)(out). The enzyme catalyses a plastoquinone + NADPH + (n+1) H(+)(in) = a plastoquinol + NADP(+) + n H(+)(out). NDH shuttles electrons from NAD(P)H:plastoquinone, via FMN and iron-sulfur (Fe-S) centers, to quinones in the photosynthetic chain and possibly in a chloroplast respiratory chain. The immediate electron acceptor for the enzyme in this species is believed to be plastoquinone. Couples the redox reaction to proton translocation, and thus conserves the redox energy in a proton gradient. The chain is NAD(P)H-quinone oxidoreductase subunit 5, chloroplastic (ndhF) from Adenocaulon himalaicum (Trailplant).